Here is a 124-residue protein sequence, read N- to C-terminus: Small ribosomal subunit protein uS12 (124 aa).

A 3-methylthioaspartic acid modification is found at Asp-89.

The protein belongs to the universal ribosomal protein uS12 family. Part of the 30S ribosomal subunit. Contacts proteins S8 and S17. May interact with IF1 in the 30S initiation complex.

Functionally, with S4 and S5 plays an important role in translational accuracy. Interacts with and stabilizes bases of the 16S rRNA that are involved in tRNA selection in the A site and with the mRNA backbone. Located at the interface of the 30S and 50S subunits, it traverses the body of the 30S subunit contacting proteins on the other side and probably holding the rRNA structure together. The combined cluster of proteins S8, S12 and S17 appears to hold together the shoulder and platform of the 30S subunit. This chain is Small ribosomal subunit protein uS12, found in Caldanaerobacter subterraneus subsp. tengcongensis (strain DSM 15242 / JCM 11007 / NBRC 100824 / MB4) (Thermoanaerobacter tengcongensis).